Here is a 225-residue protein sequence, read N- to C-terminus: Small ribosomal subunit protein uS3 (225 aa).

A KH type-2 domain is found at 38-106 (LRAHLRRKLS…DVALNIVEIR (69 aa)).

The protein belongs to the universal ribosomal protein uS3 family. As to quaternary structure, part of the 30S ribosomal subunit. Forms a tight complex with proteins S10 and S14.

Functionally, binds the lower part of the 30S subunit head. Binds mRNA in the 70S ribosome, positioning it for translation. The chain is Small ribosomal subunit protein uS3 from Gluconacetobacter diazotrophicus (strain ATCC 49037 / DSM 5601 / CCUG 37298 / CIP 103539 / LMG 7603 / PAl5).